Consider the following 314-residue polypeptide: MIEFQKPTISTVEESENYGKFVAEPLERGYGTTLGNSLRRVLLSSLPGAAINSVQIDGVLHEFTTIDGVTEDVTQIILNLKKVAMRIDSDEQKTLEVDFSGAGELTAGDIKSDGDVEILNPDLHIATVSAGKSLHMALTAVRGRGYDSAEENKAKMELGIGVLAIDSIYTPISKVNYTVEKTRVGHRDDYDKLTLEVWTDGSVSPSESLSLGSKILSEHLALFIDLSNAGKKEMMLDPDAVETVMENKEPIEELELSVRSFNCLKRAGINTIEDLTDKTLHDMGEVRNLGRKSLEEIIQKLAERGQSFKQETEN.

Residues 1–227 (MIEFQKPTIS…EHLALFIDLS (227 aa)) form an alpha N-terminal domain (alpha-NTD) region. The interval 241–314 (VETVMENKEP…GQSFKQETEN (74 aa)) is alpha C-terminal domain (alpha-CTD).

It belongs to the RNA polymerase alpha chain family. As to quaternary structure, homodimer. The RNAP catalytic core consists of 2 alpha, 1 beta, 1 beta' and 1 omega subunit. When a sigma factor is associated with the core the holoenzyme is formed, which can initiate transcription.

It carries out the reaction RNA(n) + a ribonucleoside 5'-triphosphate = RNA(n+1) + diphosphate. DNA-dependent RNA polymerase catalyzes the transcription of DNA into RNA using the four ribonucleoside triphosphates as substrates. The chain is DNA-directed RNA polymerase subunit alpha from Oenococcus oeni (strain ATCC BAA-331 / PSU-1).